The sequence spans 182 residues: Crossover junction endodeoxyribonuclease RuvC (182 aa).

Residues Asp7, Glu69, and Asp141 contribute to the active site. Asp7, Glu69, and Asp141 together coordinate Mg(2+).

This sequence belongs to the RuvC family. In terms of assembly, homodimer which binds Holliday junction (HJ) DNA. The HJ becomes 2-fold symmetrical on binding to RuvC with unstacked arms; it has a different conformation from HJ DNA in complex with RuvA. In the full resolvosome a probable DNA-RuvA(4)-RuvB(12)-RuvC(2) complex forms which resolves the HJ. Mg(2+) is required as a cofactor.

It is found in the cytoplasm. It carries out the reaction Endonucleolytic cleavage at a junction such as a reciprocal single-stranded crossover between two homologous DNA duplexes (Holliday junction).. In terms of biological role, the RuvA-RuvB-RuvC complex processes Holliday junction (HJ) DNA during genetic recombination and DNA repair. Endonuclease that resolves HJ intermediates. Cleaves cruciform DNA by making single-stranded nicks across the HJ at symmetrical positions within the homologous arms, yielding a 5'-phosphate and a 3'-hydroxyl group; requires a central core of homology in the junction. The consensus cleavage sequence is 5'-(A/T)TT(C/G)-3'. Cleavage occurs on the 3'-side of the TT dinucleotide at the point of strand exchange. HJ branch migration catalyzed by RuvA-RuvB allows RuvC to scan DNA until it finds its consensus sequence, where it cleaves and resolves the cruciform DNA. The protein is Crossover junction endodeoxyribonuclease RuvC of Polaromonas naphthalenivorans (strain CJ2).